The sequence spans 202 residues: Solute carrier family 66 member 3 (202 aa).

Positions 1–19 are cleaved as a signal peptide; it reads MEAALLGLCNWSTLGVCAA. The next 4 helical transmembrane spans lie at 33–53, 64–84, 97–117, and 171–191; these read SARG…LVFL, LTYL…LCIF, IAVL…IDLA, and FTIL…TVTV.

It localises to the membrane. The sequence is that of Solute carrier family 66 member 3 from Homo sapiens (Human).